Here is a 167-residue protein sequence, read N- to C-terminus: Peptide deformylase (167 aa).

2 residues coordinate Fe cation: Cys90 and His132. Glu133 is a catalytic residue. His136 provides a ligand contact to Fe cation.

It belongs to the polypeptide deformylase family. Fe(2+) serves as cofactor.

It carries out the reaction N-terminal N-formyl-L-methionyl-[peptide] + H2O = N-terminal L-methionyl-[peptide] + formate. Removes the formyl group from the N-terminal Met of newly synthesized proteins. Requires at least a dipeptide for an efficient rate of reaction. N-terminal L-methionine is a prerequisite for activity but the enzyme has broad specificity at other positions. The sequence is that of Peptide deformylase from Dehalococcoides mccartyi (strain ATCC BAA-2100 / JCM 16839 / KCTC 5957 / BAV1).